The chain runs to 252 residues: Trypsin iota (252 aa).

The first 19 residues, 1–19 (MAVYGIVATVLVLLLLGDA), serve as a signal peptide directing secretion. A propeptide spans 20 to 27 (SDVEATGR) (activation peptide). Positions 28–250 (IIGGSDQLIR…LRPWIVKAAN (223 aa)) constitute a Peptidase S1 domain. Cysteines 53 and 69 form a disulfide. Residues H68 and D113 each act as charge relay system in the active site. 2 cysteine pairs are disulfide-bonded: C175–C193 and C202–C226. Catalysis depends on S206, which acts as the Charge relay system.

The protein belongs to the peptidase S1 family.

The protein localises to the secreted. Its subcellular location is the extracellular space. The enzyme catalyses Preferential cleavage: Arg-|-Xaa, Lys-|-Xaa.. The chain is Trypsin iota (iotaTry) from Drosophila melanogaster (Fruit fly).